The following is a 526-amino-acid chain: MTDLEKPNLAGHMFDVGLIGGGISGLAAAKLLSEYKINVLVLEARDRVGGRTYTVRNEHVKWVDVGGAYVGPTQNRILRLSKELGIETYKVNVNERLVQYVKGKTYPFRGAFPPVWNPLAYLDYNNLWRTMDEMGKEIPVDAPWQARHAQEWDKMTMKDLIDKICWTKTAREFAYLFVNINVTSEPHEVSALWFLWYVRQCGGTARIFSVTNGGQERKFVGGSGQVSEQIMGLLGDKVKLSSPVTYIDQTDDNIIVETLNHEHYECKYVISAIPPILTAKIHFKPELPPERNQLIQRLPMGAVIKCMVYYKEAFWKKKDYCGCMIIEDEEAPIAITLDDTKPDGSLPAIMGFILARKADRQAKLHKDIRKRKICELYAKVLGSQEALYPVHYEEKNWCEEQYSGGCYTAYFPPGIMTQYGRVIRQPVGRIYFAGTETATQWSGYMEGAVEAGERAAREVLNALGKVAKKDIWVEEPESKDVPAIEITHTFLERNLPSVPGLLKITGVSTSVALLCFVLYKIKKLPC.

N-acetylmethionine is present on M1. Residues 1 to 497 are Cytoplasmic-facing; sequence MTDLEKPNLA…HTFLERNLPS (497 aa). S383 carries the post-translational modification Phosphoserine. C406 bears the S-8alpha-FAD cysteine mark. The helical; Anchor for type IV membrane protein transmembrane segment at 498 to 518 threads the bilayer; it reads VPGLLKITGVSTSVALLCFVL. The Mitochondrial intermembrane portion of the chain corresponds to 519–526; it reads YKIKKLPC. The interval 520–522 is interaction with membrane phospholipid headgroups; it reads KIK.

This sequence belongs to the flavin monoamine oxidase family. Monomer, homo- or heterodimer (containing two subunits of similar size). Each subunit contains a covalently bound flavin. Enzymatically active as monomer. The cofactor is FAD.

The protein resides in the mitochondrion outer membrane. The catalysed reaction is a secondary aliphatic amine + O2 + H2O = a primary amine + an aldehyde + H2O2. The enzyme catalyses a primary methyl amine + O2 + H2O = an aldehyde + H2O2 + NH4(+). It carries out the reaction (R)-adrenaline + O2 + H2O = (R)-3,4-dihydroxymandelaldehyde + methylamine + H2O2. It catalyses the reaction dopamine + O2 + H2O = 3,4-dihydroxyphenylacetaldehyde + H2O2 + NH4(+). The catalysed reaction is tyramine + O2 + H2O = (4-hydroxyphenyl)acetaldehyde + H2O2 + NH4(+). The enzyme catalyses (R)-noradrenaline + O2 + H2O = (R)-3,4-dihydroxymandelaldehyde + H2O2 + NH4(+). It carries out the reaction serotonin + O2 + H2O = (5-hydroxyindol-3-yl)acetaldehyde + H2O2 + NH4(+). It catalyses the reaction kynuramine + O2 + H2O = 3-(2-aminophenyl)-3-oxopropanal + H2O2 + NH4(+). The catalysed reaction is tryptamine + O2 + H2O = indole-3-acetaldehyde + H2O2 + NH4(+). The enzyme catalyses 2-phenylethylamine + O2 + H2O = 2-phenylacetaldehyde + H2O2 + NH4(+). In terms of biological role, catalyzes the oxidative deamination of primary and some secondary amine such as neurotransmitters, with concomitant reduction of oxygen to hydrogen peroxide and has important functions in the metabolism of neuroactive and vasoactive amines in the central nervous system and peripheral tissues. Preferentially oxidizes serotonin. Also catalyzes the oxidative deamination of kynuramine to 3-(2-aminophenyl)-3-oxopropanal that can spontaneously condense to 4-hydroxyquinoline. The sequence is that of Amine oxidase [flavin-containing] A from Rattus norvegicus (Rat).